Here is a 200-residue protein sequence, read N- to C-terminus: Transgelin (200 aa).

Ala-2 carries the N-acetylalanine modification. One can recognise a Calponin-homology (CH) domain in the interval 24-137 (DELEDRLVEW…RTLVALGSLA (114 aa)). One copy of the Calponin-like repeat lies at 175 to 199 (IGLQMGTNKGASQAGMSYGRPRQII).

The protein belongs to the calponin family. In terms of assembly, monomer. Gizzard, uterus, intestine, esophagus, aorta, and trace amounts in brain, liver and heart.

The protein localises to the cytoplasm. Its function is as follows. Actin cross-linking/gelling protein. This chain is Transgelin (TAGLN), found in Gallus gallus (Chicken).